The primary structure comprises 458 residues: Phosphomethylpyrimidine synthase (458 aa).

Substrate contacts are provided by residues N80, M109, Y139, H175, 195–197, 236–239, and E275; these read SRG and DSLR. Position 279 (H279) interacts with Zn(2+). Substrate is bound at residue Y302. Residue H343 participates in Zn(2+) binding. [4Fe-4S] cluster-binding residues include C423, C426, and C431.

The protein belongs to the ThiC family. It depends on [4Fe-4S] cluster as a cofactor.

The enzyme catalyses 5-amino-1-(5-phospho-beta-D-ribosyl)imidazole + S-adenosyl-L-methionine = 4-amino-2-methyl-5-(phosphooxymethyl)pyrimidine + CO + 5'-deoxyadenosine + formate + L-methionine + 3 H(+). Its pathway is cofactor biosynthesis; thiamine diphosphate biosynthesis. Its function is as follows. Catalyzes the synthesis of the hydroxymethylpyrimidine phosphate (HMP-P) moiety of thiamine from aminoimidazole ribotide (AIR) in a radical S-adenosyl-L-methionine (SAM)-dependent reaction. This Cyanothece sp. (strain PCC 7425 / ATCC 29141) protein is Phosphomethylpyrimidine synthase.